Reading from the N-terminus, the 490-residue chain is Cytochrome P450 2C2 (490 aa).

A heme-binding site is contributed by Cys435.

Belongs to the cytochrome P450 family. It depends on heme as a cofactor.

The protein resides in the endoplasmic reticulum membrane. Its subcellular location is the microsome membrane. The enzyme catalyses an organic molecule + reduced [NADPH--hemoprotein reductase] + O2 = an alcohol + oxidized [NADPH--hemoprotein reductase] + H2O + H(+). In terms of biological role, cytochromes P450 are a group of heme-thiolate monooxygenases. In liver microsomes, this enzyme is involved in an NADPH-dependent electron transport pathway. It oxidizes a variety of structurally unrelated compounds, including steroids, fatty acids, and xenobiotics. In the epoxidation of arachidonic acid it generates only 14,15- and 11,12-cis-epoxyeicosatrienoic acids. The chain is Cytochrome P450 2C2 (CYP2C2) from Oryctolagus cuniculus (Rabbit).